A 418-amino-acid polypeptide reads, in one-letter code: uncharacterized protein (418 aa).

Disordered stretches follow at residues 123–174 (KVKD…DSDK), 209–231 (FDKE…EKEE), 258–302 (KDDN…DEEL), and 344–418 (KDAD…YFKK). The segment covering 136 to 154 (NKKDKKDKNKQNEEDHLII) has biased composition (basic and acidic residues). Positions 156-170 (DVIDEEIQEKEDNES) are enriched in acidic residues. Residues 209–227 (FDKEEKEREKEKEKEKEKE) are compositionally biased toward basic and acidic residues. Residues 266 to 293 (NQNQNQNQNNNNNNNNNNNNNNNNNNNN) show a composition bias toward low complexity. Residues 344 to 356 (KDADDSDDFDEFN) show a composition bias toward acidic residues. Over residues 359 to 374 (DTESQLSKSKQKSPNV) the composition is skewed to polar residues. The span at 375 to 390 (KKTTTTTTTSTSTSSR) shows a compositional bias: low complexity. Basic residues predominate over residues 391-401 (KQSKSKLKPKS).

This is an uncharacterized protein from Dictyostelium discoideum (Social amoeba).